The primary structure comprises 354 residues: Uroporphyrinogen decarboxylase (354 aa).

Substrate-binding positions include arginine 27–arginine 31, aspartate 77, tyrosine 154, serine 209, and histidine 327.

It belongs to the uroporphyrinogen decarboxylase family. As to quaternary structure, homodimer.

The protein localises to the cytoplasm. The catalysed reaction is uroporphyrinogen III + 4 H(+) = coproporphyrinogen III + 4 CO2. The protein operates within porphyrin-containing compound metabolism; protoporphyrin-IX biosynthesis; coproporphyrinogen-III from 5-aminolevulinate: step 4/4. Its function is as follows. Catalyzes the decarboxylation of four acetate groups of uroporphyrinogen-III to yield coproporphyrinogen-III. In Teredinibacter turnerae (strain ATCC 39867 / T7901), this protein is Uroporphyrinogen decarboxylase.